A 448-amino-acid chain; its full sequence is Binary larvicide subunit BinB (448 aa).

A beta-trefoil domain region spans residues 1–198; sequence MCDSKDNSGV…TAFVNSSFYA (198 aa). Cys67 and Cys161 are disulfide-bonded. Residues 199–448 are probable pore-forming domain; that stretch reads AAIPQLPQTS…NEELIPKINQ (250 aa).

It belongs to the toxin_10 family. Forms a heterodimer with BinA. Upon toxin crystal solubilization with NaOH at pH 12, only the 63-kDa (binB) and 43-kDa (binA) proteins were detected. Interacts with mosquito protein Cpm1 which acts as its host receptor. In terms of processing, processed by proteases extracted from C.pipiens larval gut; unlike its partner BinA, it does not form a stable digestion product.

It is found in the spore. It localises to the perispore. Functionally, component of a binary toxin active against Culex and some Aedes mosquito larvae. This subunit alone has no toxic larvicidal activity. This subunit is responsible for localized binding to specific regions of the host larval gut. Binary toxin internalization into host gut cells requires both proteins. This is Binary larvicide subunit BinB (binB) from Lysinibacillus sphaericus (Bacillus sphaericus).